Reading from the N-terminus, the 579-residue chain is Glypican-2 (579 aa).

Residues 1-23 form the signal peptide; that stretch reads MSALRPLLLLLLPLCPGPGPGPG. O-linked (Xyl...) (heparan sulfate) serine glycans are attached at residues S55, S92, and S155. Disordered regions lie at residues 444-468 and 485-555; these read GGSPAEQVNNPELKVDASGPDVPTR and ALGH…RSGG. S500 and S502 each carry an O-linked (Xyl...) (heparan sulfate) serine glycan. Pro residues predominate over residues 520–529; the sequence is PARPPRPPYP. G554 carries the GPI-anchor amidated glycine lipid modification. The propeptide at 555 to 579 is removed in mature form; it reads GASIGFHTQTILILSLSALALLGPR.

It belongs to the glypican family. Interacts (via heparan sulfate) with PTN; this interaction promotes neurite outgrowth through binding of PTN with chondroitin sulfate of proteoglycans, thereby releasing PTPRS of chondroitin sulfate proteoglycans (CSPGs) and leading to binding with heparan sulfate of GPC2. Interacts (heparan sulfate chain) with MDK; this interaction is inhibited by heparin followed by chondroitin sulfate E; this interaction induces GPC2 clustering through heparan sulfate chain; this interaction induces neuronal cell adhesion and neurite outgrowth.

It is found in the cell membrane. Its subcellular location is the secreted. It localises to the extracellular space. Cell surface proteoglycan that bears heparan sulfate. May fulfill a function related to the motile behaviors of developing neurons. The polypeptide is Glypican-2 (GPC2) (Homo sapiens (Human)).